A 496-amino-acid chain; its full sequence is MKFSLAVSFFILMSLLFEDACSKEKSSKKGKGKKKQYLCPSQQSAEDLARVPPNSTSNILNRLLVSYDPRIRPNFKGIPVDVVVNIFINSFGSIQETTMDYRVNIFLRQKWNDPRLKLPSDFRGSDALTVDPTMYKCLWKPDLFFANEKSANFHDVTQENILLFIFRDGDVLVSMRLSITLSCPLDLTLFPMDTQRCKMQLESFGYTTDDLRFIWQSGDPVQLEKIALPQFDIKKEDIEYGNCTKYYKGTGYYTCVEVIFTLRRQVGFYMMGVYAPTLLIVVLSWLSFWINPDASAARVPLGIFSVLSLASECTTLAAELPKVSYVKALDVWLIACLLFGFASLVEYAVVQVMLNNPKRVEAEKARIAKAEQADGKGGNAAKKNTVNGTGTPVHISTLQVGETRCKKVCTSKSDLRSNDFSIVGSLPRDFELSNYDCYGKPIEVNNGLGKPQAKNKKPPPAKPVIPTAAKRIDLYARALFPFCFLFFNVIYWSIYL.

Positions 1 to 22 are cleaved as a signal peptide; that stretch reads MKFSLAVSFFILMSLLFEDACS. Topologically, residues 23-268 are extracellular; sequence KEKSSKKGKG…IFTLRRQVGF (246 aa). Asn-54 is a glycosylation site (N-linked (GlcNAc...) asparagine). Arg-108 and Ser-174 together coordinate glycine. The cysteines at positions 183 and 197 are disulfide-linked. Residue Asn-242 is glycosylated (N-linked (GlcNAc...) asparagine). Cys-243 and Cys-255 are disulfide-bonded. Thr-250 provides a ligand contact to glycine. Residues 269–289 traverse the membrane as a helical segment; it reads YMMGVYAPTLLIVVLSWLSFW. The Cytoplasmic portion of the chain corresponds to 290-294; the sequence is INPDA. The helical transmembrane segment at 295 to 315 threads the bilayer; it reads SAARVPLGIFSVLSLASECTT. Residues 316 to 327 are Extracellular-facing; sequence LAAELPKVSYVK. A helical transmembrane segment spans residues 328-349; the sequence is ALDVWLIACLLFGFASLVEYAV. The Cytoplasmic segment spans residues 350-471; that stretch reads VQVMLNNPKR…KPVIPTAAKR (122 aa). Thr-391 carries the phosphothreonine modification. Residues 472 to 495 form a helical membrane-spanning segment; the sequence is IDLYARALFPFCFLFFNVIYWSIY. Position 496 (Leu-496) is a topological domain, extracellular.

It belongs to the ligand-gated ion channel (TC 1.A.9) family. Glycine receptor (TC 1.A.9.3) subfamily. GLRB sub-subfamily. In terms of assembly, forms heteropentamers with glycin receptor alpha subunits. Heteropentamers with GLRA1 can be composed of two GLRA1 and three GLRB subunits, or three GLRA1 and two GLRB subunits, or four GLRA1 subunits and one GLRB subunit. Forms heteropentamers with GLRA2. Functional GLRB-GLRA2 heteropentamers contain four GLRA2 subunits and one GLRB subunit, although alternative subunit composition cannot be excluded. Forms a heteropentamer with GLRA3. Interacts with GPHN. In terms of tissue distribution, detected in spinal cord and brain stem (at protein level). Detected in spinal cord, cerebellum and brain cortex.

Its subcellular location is the postsynaptic cell membrane. It is found in the cell membrane. It localises to the synapse. The protein resides in the perikaryon. The protein localises to the cell projection. Its subcellular location is the dendrite. It is found in the cytoplasm. The enzyme catalyses chloride(in) = chloride(out). With respect to regulation, channel opening is triggered by extracellular glycine. Heteropentameric channels composed of GLRB and GLRA1 are activated by lower glycine levels than homopentameric GLRA1. Subunit of heteromeric glycine-gated chloride channels. Plays an important role in the down-regulation of neuronal excitability. Contributes to the generation of inhibitory postsynaptic currents. This chain is Glycine receptor subunit beta (Glrb), found in Rattus norvegicus (Rat).